The chain runs to 440 residues: Acetylornithine deacetylase (440 aa).

His101 is a binding site for Zn(2+). Asp103 is an active-site residue. Position 133 (Asp133) interacts with Zn(2+). The Proton acceptor role is filled by Glu167. Zn(2+)-binding residues include Glu168 and His412.

This sequence belongs to the peptidase M20A family. ArgE subfamily. As to quaternary structure, homodimer. It depends on Zn(2+) as a cofactor. Co(2+) serves as cofactor.

The enzyme catalyses N(2)-acetyl-L-ornithine + H2O = L-ornithine + acetate. The protein operates within amino-acid biosynthesis; L-arginine biosynthesis; L-ornithine from N(2)-acetyl-L-ornithine (linear): step 1/1. The protein is Acetylornithine deacetylase of Arabidopsis thaliana (Mouse-ear cress).